Here is a 372-residue protein sequence, read N- to C-terminus: MPLPDFHVSEPFTLGIELEMQVVNPPGYDLSQDSSMLIDAVKNQITAGEVKHDITESMLELATDVCRDINQAAGQFSAMQKVVLQAAADHHLEICGGGTHPFQKWQRQEVCDNERYQRTLENFGYLIQQATVFGQHVHVGCASGDDAIYLLHGLSRFVPHFIALSAASPYMQGTDTRFASSRPNIFSAFPDNGPMPWVSNWQQFEALFRCLSYTTMIDSIKDLHWDIRPSPHFGTVEVRVMDTPLTLSHAVNMAGLIQATAHWLLTERPFKHQEKDYLLYKFNRFQACRYGLEGVITDPHTGDRRSLTEATLRLLEKIAPSAHKIGASSAIEALHRQVVSGLNEAQLMRDFVADGGSLIGLVKKHCEIWAGE.

Belongs to the glutamate--cysteine ligase type 2 family. YbdK subfamily. Homodimer.

It catalyses the reaction L-cysteine + L-glutamate + ATP = gamma-L-glutamyl-L-cysteine + ADP + phosphate + H(+). Functionally, ATP-dependent carboxylate-amine ligase which exhibits weak glutamate--cysteine ligase activity. This chain is Putative glutamate--cysteine ligase 2 (ybdK), found in Escherichia coli O1:K1 / APEC.